Here is a 161-residue protein sequence, read N- to C-terminus: Small ribosomal subunit protein uS9 (161 aa).

This sequence belongs to the universal ribosomal protein uS9 family.

The chain is Small ribosomal subunit protein uS9 from Rickettsia typhi (strain ATCC VR-144 / Wilmington).